A 357-amino-acid polypeptide reads, in one-letter code: Glycerol-3-phosphate dehydrogenase [NAD(P)+] (357 aa).

Residues Ser12, Trp13, His33, and Lys115 each contribute to the NADPH site. Positions 115, 149, and 151 each coordinate sn-glycerol 3-phosphate. Gly153 provides a ligand contact to NADPH. The sn-glycerol 3-phosphate site is built by Lys204, Asp263, Arg274, and Asn275. Lys204 (proton acceptor) is an active-site residue. Arg274 contributes to the NADPH binding site. Positions 307 and 309 each coordinate NADPH.

This sequence belongs to the NAD-dependent glycerol-3-phosphate dehydrogenase family.

It is found in the cytoplasm. The enzyme catalyses sn-glycerol 3-phosphate + NAD(+) = dihydroxyacetone phosphate + NADH + H(+). The catalysed reaction is sn-glycerol 3-phosphate + NADP(+) = dihydroxyacetone phosphate + NADPH + H(+). The protein operates within membrane lipid metabolism; glycerophospholipid metabolism. In terms of biological role, catalyzes the reduction of the glycolytic intermediate dihydroxyacetone phosphate (DHAP) to sn-glycerol 3-phosphate (G3P), the key precursor for phospholipid synthesis. In Treponema denticola (strain ATCC 35405 / DSM 14222 / CIP 103919 / JCM 8153 / KCTC 15104), this protein is Glycerol-3-phosphate dehydrogenase [NAD(P)+].